Consider the following 513-residue polypeptide: Xylose import ATP-binding protein XylG (513 aa).

2 consecutive ABC transporter domains span residues 5-242 (LEMK…VGRE) and 259-505 (LRIE…LRSE). 37–44 (GENGSGKS) lines the ATP pocket.

The protein belongs to the ABC transporter superfamily. Xylose importer (TC 3.A.1.2.4) family. In terms of assembly, the complex is composed of two ATP-binding proteins (XylG), two transmembrane proteins (XylH) and a solute-binding protein (XylF).

The protein resides in the cell inner membrane. It carries out the reaction D-xylose(out) + ATP + H2O = D-xylose(in) + ADP + phosphate + H(+). In terms of biological role, part of the ABC transporter complex XylFGH involved in xylose import. Responsible for energy coupling to the transport system. The XylFGH system can also transport ribose in absence of xylose. The polypeptide is Xylose import ATP-binding protein XylG (Escherichia coli (strain K12)).